The chain runs to 261 residues: Sulfur carrier protein FdhD (261 aa).

Residue Cys-105 is the Cysteine persulfide intermediate of the active site. 245–250 (FIRGDR) is a Mo-bis(molybdopterin guanine dinucleotide) binding site.

This sequence belongs to the FdhD family.

The protein localises to the cytoplasm. Its function is as follows. Required for formate dehydrogenase (FDH) activity. Acts as a sulfur carrier protein that transfers sulfur from IscS to the molybdenum cofactor prior to its insertion into FDH. The chain is Sulfur carrier protein FdhD from Listeria monocytogenes serovar 1/2a (strain ATCC BAA-679 / EGD-e).